The sequence spans 385 residues: Chaperone protein DnaJ (385 aa).

The J domain maps to 5-70 (DYYEVLGVSK…ERKAAYDRYG (66 aa)). The segment at 143–221 (GLHKTINVPT…CNGHGRVEKD (79 aa)) adopts a CR-type zinc-finger fold. The Zn(2+) site is built by C156, C159, C173, C176, C195, C198, C209, and C212. CXXCXGXG motif repeat units follow at residues 156–163 (CTSCEGTG), 173–180 (CPTCSGMG), 195–202 (CPTCSGLG), and 209–216 (CKTCNGHG).

Belongs to the DnaJ family. As to quaternary structure, homodimer. The cofactor is Zn(2+).

It localises to the cytoplasm. Participates actively in the response to hyperosmotic and heat shock by preventing the aggregation of stress-denatured proteins and by disaggregating proteins, also in an autonomous, DnaK-independent fashion. Unfolded proteins bind initially to DnaJ; upon interaction with the DnaJ-bound protein, DnaK hydrolyzes its bound ATP, resulting in the formation of a stable complex. GrpE releases ADP from DnaK; ATP binding to DnaK triggers the release of the substrate protein, thus completing the reaction cycle. Several rounds of ATP-dependent interactions between DnaJ, DnaK and GrpE are required for fully efficient folding. Also involved, together with DnaK and GrpE, in the DNA replication of plasmids through activation of initiation proteins. This Ruegeria sp. (strain TM1040) (Silicibacter sp.) protein is Chaperone protein DnaJ.